A 510-amino-acid chain; its full sequence is Bifunctional purine biosynthesis protein PurH (510 aa).

The region spanning 1–142 (MRALLSVSDK…KNFKDVLIVT (142 aa)) is the MGS-like domain.

The protein belongs to the PurH family.

The enzyme catalyses (6R)-10-formyltetrahydrofolate + 5-amino-1-(5-phospho-beta-D-ribosyl)imidazole-4-carboxamide = 5-formamido-1-(5-phospho-D-ribosyl)imidazole-4-carboxamide + (6S)-5,6,7,8-tetrahydrofolate. It carries out the reaction IMP + H2O = 5-formamido-1-(5-phospho-D-ribosyl)imidazole-4-carboxamide. It participates in purine metabolism; IMP biosynthesis via de novo pathway; 5-formamido-1-(5-phospho-D-ribosyl)imidazole-4-carboxamide from 5-amino-1-(5-phospho-D-ribosyl)imidazole-4-carboxamide (10-formyl THF route): step 1/1. Its pathway is purine metabolism; IMP biosynthesis via de novo pathway; IMP from 5-formamido-1-(5-phospho-D-ribosyl)imidazole-4-carboxamide: step 1/1. The chain is Bifunctional purine biosynthesis protein PurH from Campylobacter concisus (strain 13826).